The sequence spans 150 residues: Large ribosomal subunit protein bL9 (150 aa).

It belongs to the bacterial ribosomal protein bL9 family.

Binds to the 23S rRNA. The protein is Large ribosomal subunit protein bL9 of Streptococcus equi subsp. equi (strain 4047).